A 70-amino-acid chain; its full sequence is Venom antimicrobial peptide-6 (70 aa).

The N-terminal stretch at 1-23 (MKSQTFFLLFLVVFLLAITQSEA) is a signal peptide. At Phe36 the chain carries Phenylalanine amide. Positions 40-70 (SLRDMDTMKYLYDPSLSAADLKTLQKLMENY) are excised as a propeptide.

This sequence belongs to the non-disulfide-bridged peptide (NDBP) superfamily. Short antimicrobial peptide (group 4) family. In terms of tissue distribution, expressed by the venom gland.

It localises to the secreted. It is found in the target cell membrane. Amphipathic peptide that exhibits extensive cytolytic activities against both prokaryotic and eukaryotic cells. Is more potent against Gram-positive bacteria (lethal concentration (LC)=0.25-2.9 uM) than against Gram-negative bacteria (LC=6.2-&gt;50 uM), and fungi ((LC)=14.1-&gt;50 uM). Shows hemolytic activity against rabbit erythrocytes (37.7% of inhibition at 6.25 uM) and cytolysis against rat dorsal root ganglions. In vivo, intravenous injection into mice tail provokes uncomfortable symptoms with a death rate of 12.5%. This chain is Venom antimicrobial peptide-6, found in Mesobuthus eupeus (Lesser Asian scorpion).